Consider the following 215-residue polypeptide: Cytidylate kinase (215 aa).

10-18 (GPAASGKGT) is a binding site for ATP.

The protein belongs to the cytidylate kinase family. Type 1 subfamily.

The protein resides in the cytoplasm. It carries out the reaction CMP + ATP = CDP + ADP. It catalyses the reaction dCMP + ATP = dCDP + ADP. The polypeptide is Cytidylate kinase (Bartonella bacilliformis (strain ATCC 35685 / KC583 / Herrer 020/F12,63)).